A 497-amino-acid polypeptide reads, in one-letter code: Replication factor C large subunit (497 aa).

50–57 (GPAGVGKT) is an ATP binding site. Basic and acidic residues predominate over residues 428–455 (KRRSLGRDEGKAFFEKKPKKQTPDKKQM). The disordered stretch occupies residues 428-497 (KRRSLGRDEG…AKPQKTLFDF (70 aa)). A compositionally biased stretch (polar residues) spans 456–465 (DLTQIINSTP). Positions 466–476 (QEDKVEKKETE) are enriched in basic and acidic residues.

Belongs to the activator 1 small subunits family. RfcL subfamily. Heteromultimer composed of small subunits (RfcS) and large subunits (RfcL).

Functionally, part of the RFC clamp loader complex which loads the PCNA sliding clamp onto DNA. The chain is Replication factor C large subunit from Methanococcoides burtonii (strain DSM 6242 / NBRC 107633 / OCM 468 / ACE-M).